Here is a 402-residue protein sequence, read N- to C-terminus: DNA primase DnaG (402 aa).

Residues 165–243 (PNLIIVEGRA…KIDFVARAPV (79 aa)) form the Toprim domain. Positions 171, 216, and 218 each coordinate Mg(2+).

This sequence belongs to the archaeal DnaG primase family. As to quaternary structure, forms a ternary complex with MCM helicase and DNA. Component of the archaeal exosome complex. The cofactor is Mg(2+).

It carries out the reaction ssDNA + n NTP = ssDNA/pppN(pN)n-1 hybrid + (n-1) diphosphate.. Its function is as follows. RNA polymerase that catalyzes the synthesis of short RNA molecules used as primers for DNA polymerase during DNA replication. Also part of the exosome, which is a complex involved in RNA degradation. Acts as a poly(A)-binding protein that enhances the interaction between heteromeric, adenine-rich transcripts and the exosome. This chain is DNA primase DnaG, found in Saccharolobus islandicus (strain Y.N.15.51 / Yellowstone #2) (Sulfolobus islandicus).